A 419-amino-acid polypeptide reads, in one-letter code: Zinc finger protein Pegasus (419 aa).

Residue K5 forms a Glycyl lysine isopeptide (Lys-Gly) (interchain with G-Cter in SUMO2) linkage. Residues 36–55 (DKEAETLQGAGTDGDQNGLD) form a disordered region. 3 C2H2-type zinc fingers span residues 82–104 (LKCR…IRIH), 110–132 (HRCH…MRSH), and 138–161 (YKCE…RRKH). K185 participates in a covalent cross-link: Glycyl lysine isopeptide (Lys-Gly) (interchain with G-Cter in SUMO2). The segment covering 262–273 (LSSLPPENQNPA) has biased composition (polar residues). 2 disordered regions span residues 262–284 (LSSL…PDEK) and 297–356 (VSAV…PTLP). A compositionally biased stretch (low complexity) spans 297–311 (VSAVSASIPQSSSPT). Over residues 332–349 (SEPSAHTSTPSIGNSQPS) the composition is skewed to polar residues. 2 C2H2-type zinc fingers span residues 364–386 (HHCQ…MGCH) and 392–416 (FQCN…RGQH).

The protein belongs to the Ikaros C2H2-type zinc-finger protein family. Self-associates. Interacts with other family members; IKZF1, IKZF2, IKZF3 and IKZF4.

The protein resides in the nucleus. Functionally, transcriptional repressor that binds the core 5'GNNTGTNG-3' DNA consensus sequence. Involved in megakaryocyte differentiation. This is Zinc finger protein Pegasus (Ikzf5) from Mus musculus (Mouse).